The sequence spans 261 residues: 5'-nucleotidase SurE (261 aa).

Positions 8, 9, 40, and 94 each coordinate a divalent metal cation.

Belongs to the SurE nucleotidase family. The cofactor is a divalent metal cation.

The protein localises to the cytoplasm. It catalyses the reaction a ribonucleoside 5'-phosphate + H2O = a ribonucleoside + phosphate. Functionally, nucleotidase that shows phosphatase activity on nucleoside 5'-monophosphates. This is 5'-nucleotidase SurE from Anaplasma marginale (strain Florida).